A 334-amino-acid polypeptide reads, in one-letter code: Malate dehydrogenase, cytoplasmic (334 aa).

Position 2 is an N-acetylserine (serine 2). NAD(+) is bound by residues 11 to 17 and aspartate 42; that span reads GAAGQIA. The substrate site is built by arginine 92 and arginine 98. An NAD(+)-binding site is contributed by asparagine 105. Residue lysine 110 is modified to N6-succinyllysine. Residue glutamine 112 participates in NAD(+) binding. An N6-acetyllysine mark is found at lysine 118 and lysine 121. Position 129–131 (129–131) interacts with NAD(+); sequence VGN. Substrate contacts are provided by asparagine 131 and arginine 162. Histidine 187 (proton acceptor) is an active-site residue. Lysine 214 carries the post-translational modification N6-succinyllysine. Serine 217 is subject to Phosphoserine. Arginine 230 carries the omega-N-methylarginine modification. Residue serine 241 is modified to Phosphoserine. Position 298 is an N6-acetyllysine; alternate (lysine 298). The residue at position 298 (lysine 298) is an N6-succinyllysine; alternate. Serine 309 bears the Phosphoserine mark. N6-succinyllysine is present on lysine 318. Phosphoserine is present on residues serine 332 and serine 333.

It belongs to the LDH/MDH superfamily. MDH type 2 family. Homodimer. In terms of processing, ISGylated. Post-translationally, acetylation at Lys-118 dramatically enhances enzymatic activity and promotes adipogenic differentiation.

The protein resides in the cytoplasm. The protein localises to the cytosol. It catalyses the reaction (S)-malate + NAD(+) = oxaloacetate + NADH + H(+). The enzyme catalyses (2R)-2-hydroxy-3-(4-hydroxyphenyl)propanoate + NAD(+) = 3-(4-hydroxyphenyl)pyruvate + NADH + H(+). It carries out the reaction (S)-2-hydroxyglutarate + NAD(+) = 2-oxoglutarate + NADH + H(+). Its function is as follows. Catalyzes the reduction of aromatic alpha-keto acids in the presence of NADH. Plays essential roles in the malate-aspartate shuttle and the tricarboxylic acid cycle, important in mitochondrial NADH supply for oxidative phosphorylation. Catalyzes the reduction of 2-oxoglutarate to 2-hydroxyglutarate, leading to elevated reactive oxygen species (ROS). The protein is Malate dehydrogenase, cytoplasmic (MDH1) of Felis catus (Cat).